Here is a 341-residue protein sequence, read N- to C-terminus: Phosphoribosylformylglycinamidine cyclo-ligase (341 aa).

The protein belongs to the AIR synthase family.

The protein resides in the cytoplasm. It carries out the reaction 2-formamido-N(1)-(5-O-phospho-beta-D-ribosyl)acetamidine + ATP = 5-amino-1-(5-phospho-beta-D-ribosyl)imidazole + ADP + phosphate + H(+). It participates in purine metabolism; IMP biosynthesis via de novo pathway; 5-amino-1-(5-phospho-D-ribosyl)imidazole from N(2)-formyl-N(1)-(5-phospho-D-ribosyl)glycinamide: step 2/2. This is Phosphoribosylformylglycinamidine cyclo-ligase from Xanthomonas campestris pv. campestris (strain B100).